We begin with the raw amino-acid sequence, 211 residues long: Formate dehydrogenase, cytochrome b556(fdo) subunit (211 aa).

Residues 1–17 (MKRRDTIVRYTAPERIN) lie on the Cytoplasmic side of the membrane. Histidine 18 is a heme b binding site. Residues 18 to 32 (HWITAFCFILAAVSG) form a helical membrane-spanning segment. Over 33-53 (LGFLFPSFNWLMQIMGTPQLA) the chain is Periplasmic. The helical transmembrane segment at 54-72 (RILHPFVGVVMFASFIIMF) threads the bilayer. Histidine 57 serves as a coordination point for heme b. Residues 73–112 (FRYWHHNLINRDDIFWAKNIRKIVVNEEVGDTGRYNFGQK) lie on the Cytoplasmic side of the membrane. A helical transmembrane segment spans residues 113–130 (CVFWAAIIFLVLLLVSGV). The Periplasmic segment spans residues 131-151 (IIWRPYFAPAFSIPVIRFALM). Residues 152 to 170 (LHSFAAVALIVVIMVHIYA) form a helical membrane-spanning segment. The heme b site is built by histidine 153 and histidine 167. Residues 171-211 (ALWVKGTITAMVEGWVTSAWAKKHHPRWYREVRKTTEKKAE) are Cytoplasmic-facing.

It belongs to the formate dehydrogenase gamma subunit family. As to quaternary structure, formate dehydrogenase is a membrane-bound complex, formed by subunits alpha, beta and gamma. Heme is required as a cofactor.

The protein localises to the cell inner membrane. Its function is as follows. Allows to use formate as major electron donor during aerobic respiration. Subunit gamma is probably the cytochrome b556(FDO) component of the formate dehydrogenase. The polypeptide is Formate dehydrogenase, cytochrome b556(fdo) subunit (fdoI) (Escherichia coli O157:H7).